The sequence spans 274 residues: Diaminopimelate epimerase (274 aa).

Residues asparagine 11, glutamine 44, and asparagine 64 each coordinate substrate. Residue cysteine 73 is the Proton donor of the active site. Substrate contacts are provided by residues 74–75, asparagine 157, asparagine 190, and 208–209; these read GN and ER. Residue cysteine 217 is the Proton acceptor of the active site. 218–219 contacts substrate; it reads GS.

This sequence belongs to the diaminopimelate epimerase family. Homodimer.

The protein localises to the cytoplasm. The catalysed reaction is (2S,6S)-2,6-diaminopimelate = meso-2,6-diaminopimelate. It participates in amino-acid biosynthesis; L-lysine biosynthesis via DAP pathway; DL-2,6-diaminopimelate from LL-2,6-diaminopimelate: step 1/1. Its function is as follows. Catalyzes the stereoinversion of LL-2,6-diaminopimelate (L,L-DAP) to meso-diaminopimelate (meso-DAP), a precursor of L-lysine and an essential component of the bacterial peptidoglycan. The sequence is that of Diaminopimelate epimerase from Actinobacillus pleuropneumoniae serotype 3 (strain JL03).